Consider the following 533-residue polypeptide: Putative adhesin P1-like protein MPN_409 (533 aa).

Disordered regions lie at residues 15–45 (KNHR…GSRS) and 92–166 (SGWR…SITP). The span at 28-45 (TGAGSSSGTSTNTSGSRS) shows a compositional bias: low complexity. A compositionally biased stretch (basic and acidic residues) spans 95–107 (RNDKNGQSDENHT).

The protein belongs to the adhesin P1 family.

The polypeptide is Putative adhesin P1-like protein MPN_409 (Mycoplasma pneumoniae (strain ATCC 29342 / M129 / Subtype 1) (Mycoplasmoides pneumoniae)).